Reading from the N-terminus, the 529-residue chain is Bifunctional purine biosynthesis protein PurH (529 aa).

Residues 1 to 148 enclose the MGS-like domain; the sequence is MQQRRPVRRA…KNHKDVAIVV (148 aa). Lys287 is modified (N6-acetyllysine).

This sequence belongs to the PurH family.

The catalysed reaction is (6R)-10-formyltetrahydrofolate + 5-amino-1-(5-phospho-beta-D-ribosyl)imidazole-4-carboxamide = 5-formamido-1-(5-phospho-D-ribosyl)imidazole-4-carboxamide + (6S)-5,6,7,8-tetrahydrofolate. It carries out the reaction IMP + H2O = 5-formamido-1-(5-phospho-D-ribosyl)imidazole-4-carboxamide. The protein operates within purine metabolism; IMP biosynthesis via de novo pathway; 5-formamido-1-(5-phospho-D-ribosyl)imidazole-4-carboxamide from 5-amino-1-(5-phospho-D-ribosyl)imidazole-4-carboxamide (10-formyl THF route): step 1/1. It participates in purine metabolism; IMP biosynthesis via de novo pathway; IMP from 5-formamido-1-(5-phospho-D-ribosyl)imidazole-4-carboxamide: step 1/1. This chain is Bifunctional purine biosynthesis protein PurH, found in Escherichia coli O6:H1 (strain CFT073 / ATCC 700928 / UPEC).